We begin with the raw amino-acid sequence, 521 residues long: Acidic amino acid decarboxylase GADL1 (521 aa).

The segment covering 1 to 12 (MSLLPDRERAPD) has biased composition (basic and acidic residues). Positions 1 to 20 (MSLLPDRERAPDGDISPQEM) are disordered. N6-(pyridoxal phosphate)lysine is present on Lys333.

Belongs to the group II decarboxylase family. Homodimer. Requires pyridoxal 5'-phosphate as cofactor. As to expression, expressed at highest levels in skeletal muscles. Also detected heart, spleen and rumen.

The catalysed reaction is L-aspartate + H(+) = beta-alanine + CO2. It catalyses the reaction 3-sulfino-L-alanine + H(+) = hypotaurine + CO2. It carries out the reaction L-cysteate + H(+) = taurine + CO2. Functionally, catalyzes the decarboxylation of L-aspartate, 3-sulfino-L-alanine (cysteine sulfinic acid), and L-cysteate to beta-alanine, hypotaurine and taurine, respectively. The preferred substrate is L-aspartate. Does not exhibit any decarboxylation activity toward glutamate. The polypeptide is Acidic amino acid decarboxylase GADL1 (GADL1) (Bos taurus (Bovine)).